A 587-amino-acid chain; its full sequence is Arginine--tRNA ligase (587 aa).

Positions 127–137 match the 'HIGH' region motif; that stretch reads PNLAKEMHVGH.

This sequence belongs to the class-I aminoacyl-tRNA synthetase family. Monomer.

It localises to the cytoplasm. The catalysed reaction is tRNA(Arg) + L-arginine + ATP = L-arginyl-tRNA(Arg) + AMP + diphosphate. The chain is Arginine--tRNA ligase from Pseudomonas aeruginosa (strain ATCC 15692 / DSM 22644 / CIP 104116 / JCM 14847 / LMG 12228 / 1C / PRS 101 / PAO1).